Consider the following 101-residue polypeptide: Small ribosomal subunit protein uS14 (101 aa).

Residues Ala-44–Val-74 are disordered. The segment covering Arg-61–Pro-70 has biased composition (basic and acidic residues).

The protein belongs to the universal ribosomal protein uS14 family. In terms of assembly, part of the 30S ribosomal subunit. Contacts proteins S3 and S10.

In terms of biological role, binds 16S rRNA, required for the assembly of 30S particles and may also be responsible for determining the conformation of the 16S rRNA at the A site. The sequence is that of Small ribosomal subunit protein uS14 from Cutibacterium acnes (strain DSM 16379 / KPA171202) (Propionibacterium acnes).